A 540-amino-acid polypeptide reads, in one-letter code: Keratin, type II cytoskeletal 73 (540 aa).

A head region spans residues 1–131 (MSRQFTYKSG…DPEIQKVRAQ (131 aa)). The coil 1A stretch occupies residues 132 to 167 (EREQIKVLNNKFASFIDKVRFLEQQNQVLETKWELL). In terms of domain architecture, IF rod spans 132 to 445 (EREQIKVLNN…KLLEGEECRM (314 aa)). The interval 168–186 (QQLDLNNCKNNLEPILEGY) is linker 1. A coil 1B region spans residues 187–278 (ISNLRKQLET…CLYEGETAQI (92 aa)). The linker 12 stretch occupies residues 279-302 (QSHISDTSIILSMDNNRNLDLDSI). Residues 303-441 (IAEVRAQYEE…ATYRKLLEGE (139 aa)) are coil 2. Residues 442–540 (ECRMSGEYTN…LSSPTKKTMR (99 aa)) form a tail region. The segment at 502 to 540 (SGNCSPRGEARTRLGSASEFRDSQGKTLALSSPTKKTMR) is disordered. Residues 526-540 (GKTLALSSPTKKTMR) are compositionally biased toward polar residues.

The protein belongs to the intermediate filament family. Heterotetramer of two type I and two type II keratins. As to expression, highly expressed in hair follicles from scalp. In hair, it is specifically present in the inner root sheath (IRS) of the hair follicle. Present in the IRS cuticle, but not in Henle or Huxley layers of the IRS. In the IRS cuticle, it is expressed between the lowermost bulb region of the cuticle and the region where Henle cells undergo abrupt terminal differentiation. Detected up to the uppermost cortex region where cuticle cells terminally differentiate (at protein level).

Its function is as follows. Has a role in hair formation. Specific component of keratin intermediate filaments in the inner root sheath (IRS) of the hair follicle. This Homo sapiens (Human) protein is Keratin, type II cytoskeletal 73 (KRT73).